A 215-amino-acid chain; its full sequence is 3-demethoxyubiquinol 3-hydroxylase (215 aa).

Fe cation-binding residues include glutamate 64, glutamate 94, histidine 97, glutamate 146, glutamate 178, and histidine 181.

It belongs to the COQ7 family. It depends on Fe cation as a cofactor.

It localises to the cell membrane. The catalysed reaction is a 5-methoxy-2-methyl-3-(all-trans-polyprenyl)benzene-1,4-diol + AH2 + O2 = a 3-demethylubiquinol + A + H2O. Its pathway is cofactor biosynthesis; ubiquinone biosynthesis. Functionally, catalyzes the hydroxylation of 2-nonaprenyl-3-methyl-6-methoxy-1,4-benzoquinol during ubiquinone biosynthesis. The sequence is that of 3-demethoxyubiquinol 3-hydroxylase from Coxiella burnetii (strain RSA 331 / Henzerling II).